The sequence spans 56 residues: Large ribosomal subunit protein bL33 (56 aa).

It belongs to the bacterial ribosomal protein bL33 family.

The polypeptide is Large ribosomal subunit protein bL33 (Ehrlichia canis (strain Jake)).